A 1046-amino-acid chain; its full sequence is Toluene efflux pump membrane transporter TtgE (1046 aa).

The next 12 membrane-spanning stretches (helical) occupy residues 10–30, 339–359, 370–390, 392–412, 440–460, 470–490, 542–562, 871–891, 895–915, 927–947, 973–993, and 1008–1028; these read IFAW…LTKM, SVVH…FLFL, LAVP…GISI, VLTM…AIVV, GALV…AFFG, FAVT…IFTP, LIFA…PKAF, APML…ALYE, VPMS…LATL, VGLM…IEFA, IIMT…ATGA, and GMIT…VVVV.

It belongs to the resistance-nodulation-cell division (RND) (TC 2.A.6) family.

It localises to the cell inner membrane. In terms of biological role, the inner membrane transporter component of an inducible organic solvent efflux pump. Involved in export of toluene and styrene but not of m-xylene, propylbenzene or ethylbenzene. Is not involved in antibiotic or AMP efflux. This is Toluene efflux pump membrane transporter TtgE (ttgE) from Pseudomonas putida (strain DOT-T1E).